Consider the following 453-residue polypeptide: MFDLKTILDHPNIPWKLIISGFSIAQFSFESYLTYRQYQKLSETKLPPVLEDEIDDETFHKSRNYSRAKAKFSIFGDVYNLAQKLVFIKYDLFPKIWHMAVSLLNAVLPVRFHMVSTVAQSLCFLGLLSSLSTLVDLPLSYYSHFVLEEKFGFNKLTVQLWITDMIKSLTLAYAIGGPILYLFLKIFDKFPTDFLWYIMVFLFVVQILAMTIIPVFIMPMFNKFTPLEDGELKKSIESLADRVGFPLDKIFVIDGSKRSSHSNAYFTGLPFTSKRIVLFDTLVNSNSTDEITAVLAHEIGHWQKNHIVNMVIFSQLHTFLIFSLFTSIYRNTSFYNTFGFFLEKSTGSFVDPVITKEFPIIIGFMLFNDLLTPLECAMQFVMSLISRTHEYQADAYAKKLGYKQNLCRALIDLQIKNLSTMNVDPLYSSYHYSHPTLAERLTALDYVSEKKKN.

Residues 1–12 (MFDLKTILDHPN) are Lumenal-facing. Residues 13 to 33 (IPWKLIISGFSIAQFSFESYL) form a helical membrane-spanning segment. Topologically, residues 34–89 (TYRQYQKLSETKLPPVLEDEIDDETFHKSRNYSRAKAKFSIFGDVYNLAQKLVFIK) are cytoplasmic. A helical membrane pass occupies residues 90–110 (YDLFPKIWHMAVSLLNAVLPV). Residues 111-121 (RFHMVSTVAQS) lie on the Lumenal side of the membrane. Residues 122 to 142 (LCFLGLLSSLSTLVDLPLSYY) form a helical membrane-spanning segment. At 143-167 (SHFVLEEKFGFNKLTVQLWITDMIK) the chain is on the cytoplasmic side. The helical transmembrane segment at 168-188 (SLTLAYAIGGPILYLFLKIFD) threads the bilayer. Over 189–197 (KFPTDFLWY) the chain is Lumenal. Residues 198–218 (IMVFLFVVQILAMTIIPVFIM) form a helical membrane-spanning segment. At 219–306 (PMFNKFTPLE…HEIGHWQKNH (88 aa)) the chain is on the cytoplasmic side. A Zn(2+)-binding site is contributed by histidine 297. Glutamate 298 is an active-site residue. Residue histidine 301 participates in Zn(2+) binding. The helical transmembrane segment at 307-327 (IVNMVIFSQLHTFLIFSLFTS) threads the bilayer. The Lumenal segment spans residues 328 to 357 (IYRNTSFYNTFGFFLEKSTGSFVDPVITKE). A helical transmembrane segment spans residues 358–378 (FPIIIGFMLFNDLLTPLECAM). Topologically, residues 379–453 (QFVMSLISRT…LDYVSEKKKN (75 aa)) are cytoplasmic. Glutamate 390 is a Zn(2+) binding site. The active-site Proton donor is aspartate 394.

The protein belongs to the peptidase M48A family. Zn(2+) is required as a cofactor.

It localises to the endoplasmic reticulum membrane. The catalysed reaction is Hydrolyzes the peptide bond -P2-(S-farnesyl or geranylgeranyl)C-P1'-P2'-P3'-COOH where P1' and P2' are amino acids with aliphatic side chains and P3' is any C-terminal residue.. Its function is as follows. Proteolytically removes the C-terminal three residues of farnesylated A-factor mating pheromone. Also acts to cleave the N-terminal extension of the pheromone. Does not act on Ras. The polypeptide is CAAX prenyl protease 1 (STE24) (Saccharomyces cerevisiae (strain ATCC 204508 / S288c) (Baker's yeast)).